A 268-amino-acid chain; its full sequence is Tryptophan synthase alpha chain (268 aa).

Residues glutamate 49 and aspartate 60 each act as proton acceptor in the active site.

It belongs to the TrpA family. As to quaternary structure, tetramer of two alpha and two beta chains.

The enzyme catalyses (1S,2R)-1-C-(indol-3-yl)glycerol 3-phosphate + L-serine = D-glyceraldehyde 3-phosphate + L-tryptophan + H2O. The protein operates within amino-acid biosynthesis; L-tryptophan biosynthesis; L-tryptophan from chorismate: step 5/5. Functionally, the alpha subunit is responsible for the aldol cleavage of indoleglycerol phosphate to indole and glyceraldehyde 3-phosphate. The polypeptide is Tryptophan synthase alpha chain (Sodalis glossinidius (strain morsitans)).